Consider the following 620-residue polypeptide: Glutathione-regulated potassium-efflux system protein KefC (620 aa).

Helical transmembrane passes span 4–24, 26–46, 54–74, 90–110, 114–134, 149–169, 178–198, 218–238, 270–290, 294–314, 327–347, and 359–379; these read HTLI…PIAV, LGLG…PWGL, SILH…GLEL, GALQ…LLGL, VAEL…MQAM, FAVL…IPLL, MGAF…VVLL, VFSA…EEVG, GLLL…GTLL, LRIV…LWLI, WFAV…GAAQ, and SLTL…VILN. Positions 399–518 constitute an RCK N-terminal domain; it reads QPRVIIAGFG…AGVEKPERET (120 aa). Residues 597 to 620 are disordered; the sequence is GWQGTEEGKHTGNMADEPETKPSS.

This sequence belongs to the monovalent cation:proton antiporter 2 (CPA2) transporter (TC 2.A.37) family. KefC subfamily. As to quaternary structure, homodimer. Interacts with the regulatory subunit KefF.

Its subcellular location is the cell inner membrane. In terms of biological role, pore-forming subunit of a potassium efflux system that confers protection against electrophiles. Catalyzes K(+)/H(+) antiport. The sequence is that of Glutathione-regulated potassium-efflux system protein KefC from Escherichia coli O8 (strain IAI1).